The sequence spans 66 residues: Large ribosomal subunit protein bL35 (66 aa).

Basic residues predominate over residues 1 to 26 (MPKMKTHRGGAKRVKRTGSGKLKRSR). Disordered regions lie at residues 1–28 (MPKM…SRAY) and 36–55 (KSTK…KGDQ).

This sequence belongs to the bacterial ribosomal protein bL35 family.

This chain is Large ribosomal subunit protein bL35, found in Macrococcus caseolyticus (strain JCSC5402) (Macrococcoides caseolyticum).